Consider the following 425-residue polypeptide: Orexin/Hypocretin receptor type 1 (425 aa).

Residues 1–24 are disordered; the sequence is MEPSATPGAQMGVPPGSREPSPVP. Over 1 to 46 the chain is Extracellular; that stretch reads MEPSATPGAQMGVPPGSREPSPVPPDYEDEFLRYLWRDYLYPKQYE. A required for response to orexin-A region spans residues 26 to 41; it reads DYEDEFLRYLWRDYLY. A helical membrane pass occupies residues 47–67; sequence WVLIAAYVAVFVVALVGNTLV. Over 68 to 82 the chain is Cytoplasmic; that stretch reads CLAVWRNHHMRTVTN. A helical membrane pass occupies residues 83–105; sequence YFIVNLSLADVLVTAICLPASLL. The Extracellular portion of the chain corresponds to 106–119; that stretch reads VDITESWLFGHALC. A disulfide bridge connects residues C119 and C202. The chain crosses the membrane as a helical span at residues 120-140; sequence KVIPYLQAVSVSVAVLTLSFI. The Cytoplasmic portion of the chain corresponds to 141-160; it reads ALDRWYAICHPLLFKSTARR. A helical transmembrane segment spans residues 161–182; that stretch reads ARGSILGIWAVSLAIMVPQAAV. The Extracellular portion of the chain corresponds to 183-213; that stretch reads MECSSVLPELANRTRLFSVCDERWADDLYPK. N194 carries an N-linked (GlcNAc...) asparagine glycan. Residues 214–235 form a helical membrane-spanning segment; the sequence is IYHSCFFIVTYLAPLGLMAMAY. Residues 236–298 are Cytoplasmic-facing; sequence FQIFRKLWGR…QMRARRKTAK (63 aa). Residues 299 to 321 form a helical membrane-spanning segment; sequence MLMVVLLVFALCYLPISVLNVLK. N318 contacts suvorexant. Over 322-336 the chain is Extracellular; it reads RVFGMFRQASDREAV. A helical transmembrane segment spans residues 337-360; the sequence is YACFTFSHWLVYANSAANPIIYNF. Topologically, residues 361–425 are cytoplasmic; it reads LSGKFREQFK…VLTSVTTVLP (65 aa).

Belongs to the G-protein coupled receptor 1 family.

It localises to the cell membrane. Functionally, moderately selective excitatory receptor for orexin-A and, with a lower affinity, for orexin-B neuropeptide. Triggers an increase in cytoplasmic Ca(2+) levels in response to orexin-A binding. This chain is Orexin/Hypocretin receptor type 1, found in Homo sapiens (Human).